A 476-amino-acid polypeptide reads, in one-letter code: Bifunctional protein HldE (476 aa).

The ribokinase stretch occupies residues 1–319 (MKVSLPAFEK…EALALHHGES (319 aa)). An ATP-binding site is contributed by 195–198 (NMSE). The active site involves Asp-264. The cytidylyltransferase stretch occupies residues 345-476 (MTNGCFDILH…AIIQNIMANQ (132 aa)).

It in the N-terminal section; belongs to the carbohydrate kinase PfkB family. In the C-terminal section; belongs to the cytidylyltransferase family. Homodimer.

It carries out the reaction D-glycero-beta-D-manno-heptose 7-phosphate + ATP = D-glycero-beta-D-manno-heptose 1,7-bisphosphate + ADP + H(+). The enzyme catalyses D-glycero-beta-D-manno-heptose 1-phosphate + ATP + H(+) = ADP-D-glycero-beta-D-manno-heptose + diphosphate. The protein operates within nucleotide-sugar biosynthesis; ADP-L-glycero-beta-D-manno-heptose biosynthesis; ADP-L-glycero-beta-D-manno-heptose from D-glycero-beta-D-manno-heptose 7-phosphate: step 1/4. It functions in the pathway nucleotide-sugar biosynthesis; ADP-L-glycero-beta-D-manno-heptose biosynthesis; ADP-L-glycero-beta-D-manno-heptose from D-glycero-beta-D-manno-heptose 7-phosphate: step 3/4. Functionally, catalyzes the phosphorylation of D-glycero-D-manno-heptose 7-phosphate at the C-1 position to selectively form D-glycero-beta-D-manno-heptose-1,7-bisphosphate. Catalyzes the ADP transfer from ATP to D-glycero-beta-D-manno-heptose 1-phosphate, yielding ADP-D-glycero-beta-D-manno-heptose. In Shewanella baltica (strain OS155 / ATCC BAA-1091), this protein is Bifunctional protein HldE.